A 264-amino-acid polypeptide reads, in one-letter code: Catenin delta-2 (264 aa).

4 ARM repeats span residues 20–59 (NKIKAEIRRQGGIQLLVDLLDHRMTEVHRSACGALRNLVY), 64–104 (DDNK…NLSS), 120–162 (LTNA…NVSS), and 166–211 (EARR…NLSY). Residues 238–264 (GKDAESSGCWGKKKKKKKSQDQWDGVG) form a disordered region.

This sequence belongs to the beta-catenin family. In terms of assembly, binds to E-cadherin at a juxtamembrane site within the cytoplasmic domain. Binds to PSEN1. Interacts with ZBTB33. Interacts with ARHGEF28. Interacts (via the extreme C-terminus) with FRMPD2 (via the PDZ 2 domain). Interacts with PDZD2. Interacts with CDK5. Interacts with CTNBB1. Interacts with GSK3A and GSK3B. Interacts with DNM2. Interacts with CCDC85B. In terms of processing, O-glycosylated. Phosphorylated by CDK5. Phosphorylated by GSK3B. Predominantly expressed in brain; accumulates in cortical neurons (at protein level).

It localises to the nucleus. The protein localises to the cell junction. It is found in the adherens junction. The protein resides in the cell projection. Its subcellular location is the dendrite. It localises to the perikaryon. Functionally, has a critical role in neuronal development, particularly in the formation and/or maintenance of dendritic spines and synapses. Involved in the regulation of canonical Wnt signaling. It probably acts on beta-catenin turnover, facilitating beta-catenin interaction with GSK3B, phosphorylation, ubiquitination and degradation. May be involved in neuronal cell adhesion and tissue morphogenesis and integrity by regulating adhesion molecules. Functions as a transcriptional activator when bound to ZBTB33. The sequence is that of Catenin delta-2 (Ctnnd2) from Rattus norvegicus (Rat).